The sequence spans 379 residues: Protein psi1 (379 aa).

In terms of domain architecture, J spans Met-1–Thr-70. 2 disordered regions span residues Ile-69–Ala-95 and Phe-176–Glu-205. Residues Ala-81 to Ala-95 show a composition bias toward gly residues.

In terms of biological role, required for nuclear migration during mitosis. It is required for the normal initiation of translation. This Schizosaccharomyces pombe (strain 972 / ATCC 24843) (Fission yeast) protein is Protein psi1 (psi1).